The following is a 146-amino-acid chain: Large ribosomal subunit protein uL23m (146 aa).

Residues 108 to 138 are disordered; that stretch reads PDLFPEKDPRSPEPLEEELPQQRQSSDLRCP. Residues 111–120 show a composition bias toward basic and acidic residues; the sequence is FPEKDPRSPE.

This sequence belongs to the universal ribosomal protein uL23 family. Component of the mitochondrial ribosome large subunit (39S) which comprises a 16S rRNA and about 50 distinct proteins.

Its subcellular location is the mitochondrion. The chain is Large ribosomal subunit protein uL23m (Mrpl23) from Mus musculus (Mouse).